A 962-amino-acid polypeptide reads, in one-letter code: Protease 3 (962 aa).

A signal peptide spans 1–23; sequence MPRSTWFKALLLLVALWAPLSQA. Residue histidine 88 coordinates Zn(2+). The active-site Proton acceptor is the glutamate 91. Residues histidine 92 and glutamate 169 each contribute to the Zn(2+) site.

It belongs to the peptidase M16 family. In terms of assembly, monomer. Requires Zn(2+) as cofactor.

The protein resides in the periplasm. It catalyses the reaction Preferential cleavage of 16-Tyr-|-Leu-17 and 25-Phe-|-Tyr-26 bonds of oxidized insulin B chain. Also acts on other substrates of Mw less than 7 kDa such as insulin and glucagon.. Endopeptidase that degrades small peptides of less than 7 kDa, such as glucagon and insulin. The protein is Protease 3 (ptrA) of Escherichia coli O157:H7.